The sequence spans 95 residues: Signal recognition particle 19 kDa protein (95 aa).

This sequence belongs to the SRP19 family. As to quaternary structure, part of the signal recognition particle protein translocation system, which is composed of SRP and FtsY. Archaeal SRP consists of a 7S RNA molecule of 300 nucleotides and two protein subunits: SRP54 and SRP19.

The protein resides in the cytoplasm. Its function is as follows. Involved in targeting and insertion of nascent membrane proteins into the cytoplasmic membrane. Binds directly to 7S RNA and mediates binding of the 54 kDa subunit of the SRP. The protein is Signal recognition particle 19 kDa protein of Staphylothermus marinus (strain ATCC 43588 / DSM 3639 / JCM 9404 / F1).